The sequence spans 842 residues: Xyloglucanase Xgh74A (842 aa).

A signal peptide spans 1-32; sequence MVKKFTSKIKAAVFAAVVAATAIFGPAISSQA. Aspartate 70 (nucleophile) is an active-site residue. 4 BNR repeats span residues 134–144, 185–196, 252–262, and 358–368; these read RSTDRGETWEK, WRSTDYGVTWSK, YRSTDGGVTWK, and FRSTDGGATWK. Aspartate 480 functions as the Proton donor in the catalytic mechanism. 5 BNR repeats span residues 533-541, 577-586, 616-626, 660-671, and 708-718; these read FSYDGGRNW, VTTDNGNSWK, YISTDGGLTFT, WRSTDGGYTFEK, and FRSDDAGKTWV. The Dockerin domain occupies 771 to 841; it reads DKGLVGDLNG…LLQAIPELPK (71 aa).

The protein belongs to the glycosyl hydrolase 74 family.

Functionally, hydrolyzes the glucosidic bonds of unbranched Glc residues in tamarind seed xyloglucan, producing XXXG, XLXG, XXLG and XLLG. Has low activity on carboxymethylcellulose, lichenan,hydroxyethylcellulose and glucuronoxylan, and no activity on xylan, polygalaturonic acid, wheat arabinoxylan, rhamnogalacturan, curdlan, laminarin, galactomannan, galactan, arabinan and pachyman or amorphous cellulose. This Acetivibrio thermocellus (strain ATCC 27405 / DSM 1237 / JCM 9322 / NBRC 103400 / NCIMB 10682 / NRRL B-4536 / VPI 7372) (Clostridium thermocellum) protein is Xyloglucanase Xgh74A.